The chain runs to 517 residues: Probable anion transporter 6, chloroplastic (517 aa).

Residues 51-73 (TERVRESKKLPPKDPIEDPKPQL) are disordered. Residues 52–70 (ERVRESKKLPPKDPIEDPK) show a composition bias toward basic and acidic residues. 10 consecutive transmembrane segments (helical) span residues 130 to 150 (FGWS…GYAL), 170 to 190 (IGVF…GFMP), 229 to 249 (FVFG…PPII), 255 to 275 (ESVF…FQFL), 312 to 332 (SFFQ…GSWG), 352 to 372 (LTEA…VTSL), 397 to 417 (IAFV…GLPP), 420 to 440 (IVGI…GLYC), 452 to 472 (ILLG…VALT), and 484 to 504 (MSLF…WLAF).

Belongs to the major facilitator superfamily. Sodium/anion cotransporter (TC 2.A.1.14) family. In terms of tissue distribution, expressed in leaf veins and sepals.

Its subcellular location is the plastid. It localises to the chloroplast membrane. Inorganic phosphate and probable anion transporter. This Arabidopsis thaliana (Mouse-ear cress) protein is Probable anion transporter 6, chloroplastic (ANTR6).